We begin with the raw amino-acid sequence, 280 residues long: Acyl-[acyl-carrier-protein]--UDP-N-acetylglucosamine O-acyltransferase (280 aa).

The protein belongs to the transferase hexapeptide repeat family. LpxA subfamily. Homotrimer.

The protein localises to the cytoplasm. The enzyme catalyses a (3R)-hydroxyacyl-[ACP] + UDP-N-acetyl-alpha-D-glucosamine = a UDP-3-O-[(3R)-3-hydroxyacyl]-N-acetyl-alpha-D-glucosamine + holo-[ACP]. It participates in glycolipid biosynthesis; lipid IV(A) biosynthesis; lipid IV(A) from (3R)-3-hydroxytetradecanoyl-[acyl-carrier-protein] and UDP-N-acetyl-alpha-D-glucosamine: step 1/6. In terms of biological role, involved in the biosynthesis of lipid A, a phosphorylated glycolipid that anchors the lipopolysaccharide to the outer membrane of the cell. This chain is Acyl-[acyl-carrier-protein]--UDP-N-acetylglucosamine O-acyltransferase, found in Chlamydia trachomatis serovar A (strain ATCC VR-571B / DSM 19440 / HAR-13).